A 347-amino-acid polypeptide reads, in one-letter code: Putative histone PARylation factor 1-like (347 aa).

Met1 carries the N-acetylmethionine modification. Lys187 and Lys234 each carry N6-acetyllysine.

It belongs to the HPF1 family.

In Homo sapiens (Human), this protein is Putative histone PARylation factor 1-like.